Consider the following 361-residue polypeptide: Peptide chain release factor 1 (361 aa).

Q237 bears the N5-methylglutamine mark. The disordered stretch occupies residues K287–S306.

This sequence belongs to the prokaryotic/mitochondrial release factor family. Post-translationally, methylated by PrmC. Methylation increases the termination efficiency of RF1.

The protein resides in the cytoplasm. In terms of biological role, peptide chain release factor 1 directs the termination of translation in response to the peptide chain termination codons UAG and UAA. In Alteromonas mediterranea (strain DSM 17117 / CIP 110805 / LMG 28347 / Deep ecotype), this protein is Peptide chain release factor 1.